Here is a 296-residue protein sequence, read N- to C-terminus: 4-hydroxy-tetrahydrodipicolinate synthase (296 aa).

A pyruvate-binding site is contributed by Thr-49. Tyr-137 acts as the Proton donor/acceptor in catalysis. Residue Lys-166 is the Schiff-base intermediate with substrate of the active site. Ile-208 contacts pyruvate.

Belongs to the DapA family. Homotetramer; dimer of dimers.

The protein localises to the cytoplasm. It catalyses the reaction L-aspartate 4-semialdehyde + pyruvate = (2S,4S)-4-hydroxy-2,3,4,5-tetrahydrodipicolinate + H2O + H(+). It participates in amino-acid biosynthesis; L-lysine biosynthesis via DAP pathway; (S)-tetrahydrodipicolinate from L-aspartate: step 3/4. Its function is as follows. Catalyzes the condensation of (S)-aspartate-beta-semialdehyde [(S)-ASA] and pyruvate to 4-hydroxy-tetrahydrodipicolinate (HTPA). In Chlorobium limicola (strain DSM 245 / NBRC 103803 / 6330), this protein is 4-hydroxy-tetrahydrodipicolinate synthase.